The primary structure comprises 200 residues: Ras-related protein RABF2b (200 aa).

17-25 (GDVGAGKSS) lines the GTP pocket. The Effector region signature appears at 39 to 47 (QESTIGAAF). Residues 65–69 (DTAGQ), 123–126 (NKSD), and 153–154 (SA) contribute to the GTP site. S-geranylgeranyl cysteine attachment occurs at residues Cys-198 and Cys-199.

It belongs to the small GTPase superfamily. Rab family. Interacts with VPS9A homodimer. Interacts with TCTP1. Interacts with MON1. Interacts with EREX (via PX domain). Binds to VPS3. Expressed in roots and actively dividing cells.

The protein resides in the early endosome membrane. It localises to the endosome membrane. It is found in the prevacuolar compartment membrane. The protein localises to the endosome. Its subcellular location is the multivesicular body membrane. The protein resides in the cell membrane. It localises to the cytoplasm. Its activity is regulated as follows. Regulated by guanine nucleotide exchange factors (GEFs) which promote the exchange of bound GDP for free GTP. Endosomal protein that may be involved in endocytosis. Involved in the trafficking of proteins from prevacuolar compartments (PVCs) to vacuoles. May activate the MON1-CCZ1 complex which acts as guanine nucleotide exchange factors (GEF) for Rab7 protein family, and serves as a link between Rab5 and Rab7 families in PVCs, and mediates PVC maturation. Involved in vacuolar transport of storage proteins with EREX as effector. Regulates membrane trafficking to protein storage vacuoles (PSVs). This chain is Ras-related protein RABF2b, found in Arabidopsis thaliana (Mouse-ear cress).